Here is a 537-residue protein sequence, read N- to C-terminus: Glucan 1,6-alpha-glucosidase (537 aa).

The active-site Nucleophile is the Asp194. Glu236 serves as the catalytic Proton donor.

Belongs to the glycosyl hydrolase 13 family.

It localises to the cytoplasm. It carries out the reaction Hydrolysis of (1-&gt;6)-alpha-D-glucosidic linkages in (1-&gt;6)-alpha-D-glucans and derived oligosaccharides.. Functionally, the physiological substrates may be short isomaltosaccharides. In Streptococcus dysgalactiae subsp. equisimilis (Streptococcus equisimilis), this protein is Glucan 1,6-alpha-glucosidase (dexB).